The sequence spans 957 residues: Glycine dehydrogenase (decarboxylating) (957 aa).

Lys-708 is modified (N6-(pyridoxal phosphate)lysine).

It belongs to the GcvP family. As to quaternary structure, the glycine cleavage system is composed of four proteins: P, T, L and H. Requires pyridoxal 5'-phosphate as cofactor.

It carries out the reaction N(6)-[(R)-lipoyl]-L-lysyl-[glycine-cleavage complex H protein] + glycine + H(+) = N(6)-[(R)-S(8)-aminomethyldihydrolipoyl]-L-lysyl-[glycine-cleavage complex H protein] + CO2. Its function is as follows. The glycine cleavage system catalyzes the degradation of glycine. The P protein binds the alpha-amino group of glycine through its pyridoxal phosphate cofactor; CO(2) is released and the remaining methylamine moiety is then transferred to the lipoamide cofactor of the H protein. The sequence is that of Glycine dehydrogenase (decarboxylating) from Pectobacterium atrosepticum (strain SCRI 1043 / ATCC BAA-672) (Erwinia carotovora subsp. atroseptica).